The primary structure comprises 319 residues: Acetyl-coenzyme A carboxylase carboxyl transferase subunit alpha (319 aa).

Residues 35 to 296 (NIDEEVHRLR…KAQLLADLAD (262 aa)) enclose the CoA carboxyltransferase C-terminal domain.

It belongs to the AccA family. As to quaternary structure, acetyl-CoA carboxylase is a heterohexamer composed of biotin carboxyl carrier protein (AccB), biotin carboxylase (AccC) and two subunits each of ACCase subunit alpha (AccA) and ACCase subunit beta (AccD).

The protein localises to the cytoplasm. The catalysed reaction is N(6)-carboxybiotinyl-L-lysyl-[protein] + acetyl-CoA = N(6)-biotinyl-L-lysyl-[protein] + malonyl-CoA. The protein operates within lipid metabolism; malonyl-CoA biosynthesis; malonyl-CoA from acetyl-CoA: step 1/1. Functionally, component of the acetyl coenzyme A carboxylase (ACC) complex. First, biotin carboxylase catalyzes the carboxylation of biotin on its carrier protein (BCCP) and then the CO(2) group is transferred by the carboxyltransferase to acetyl-CoA to form malonyl-CoA. This is Acetyl-coenzyme A carboxylase carboxyl transferase subunit alpha from Escherichia coli O139:H28 (strain E24377A / ETEC).